The following is a 426-amino-acid chain: Glutamate-1-semialdehyde 2,1-aminomutase (426 aa).

Lys265 is modified (N6-(pyridoxal phosphate)lysine).

This sequence belongs to the class-III pyridoxal-phosphate-dependent aminotransferase family. HemL subfamily. In terms of assembly, homodimer. It depends on pyridoxal 5'-phosphate as a cofactor.

It localises to the cytoplasm. It carries out the reaction (S)-4-amino-5-oxopentanoate = 5-aminolevulinate. It participates in porphyrin-containing compound metabolism; protoporphyrin-IX biosynthesis; 5-aminolevulinate from L-glutamyl-tRNA(Glu): step 2/2. This chain is Glutamate-1-semialdehyde 2,1-aminomutase, found in Halorhodospira halophila (strain DSM 244 / SL1) (Ectothiorhodospira halophila (strain DSM 244 / SL1)).